Consider the following 173-residue polypeptide: Ribosome maturation factor RimM (173 aa).

The PRC barrel domain maps to 102-173 (EGEYYWSDLI…TMLVDWDPEF (72 aa)).

This sequence belongs to the RimM family. As to quaternary structure, binds ribosomal protein uS19.

It is found in the cytoplasm. Functionally, an accessory protein needed during the final step in the assembly of 30S ribosomal subunit, possibly for assembly of the head region. Essential for efficient processing of 16S rRNA. May be needed both before and after RbfA during the maturation of 16S rRNA. It has affinity for free ribosomal 30S subunits but not for 70S ribosomes. This is Ribosome maturation factor RimM from Methylobacillus flagellatus (strain ATCC 51484 / DSM 6875 / VKM B-1610 / KT).